We begin with the raw amino-acid sequence, 90 residues long: Small ribosomal subunit protein uS15c (90 aa).

It belongs to the universal ribosomal protein uS15 family. Part of the 30S ribosomal subunit.

It is found in the plastid. Its subcellular location is the chloroplast. This chain is Small ribosomal subunit protein uS15c (rps15), found in Acorus calamus (Sweet flag).